A 328-amino-acid chain; its full sequence is L-arabinose transport system permease protein AraH (328 aa).

10 helical membrane passes run 29-49 (VVFA…ATFI), 53-73 (GLGL…FCLA), 79-99 (LSVA…INLT), 104-124 (IGVA…GFVI), 129-149 (INAL…AYII), 171-191 (FGLP…GLLL), 220-240 (TKII…IILA), 249-269 (MTSI…GVSL), 276-296 (ISYV…MNLL), and 297-317 (NISP…AVIF).

This sequence belongs to the binding-protein-dependent transport system permease family. AraH/RbsC subfamily.

Its subcellular location is the cell inner membrane. Functionally, part of the binding-protein-dependent transport system for L-arabinose. Probably responsible for the translocation of the substrate across the membrane. The sequence is that of L-arabinose transport system permease protein AraH (araH) from Escherichia coli (strain K12).